The sequence spans 72 residues: Translation initiation factor IF-1 (72 aa).

Residues 1-72 (MAKEDNIEMQ…SKGRIVFRSR (72 aa)) form the S1-like domain.

It belongs to the IF-1 family. Component of the 30S ribosomal translation pre-initiation complex which assembles on the 30S ribosome in the order IF-2 and IF-3, IF-1 and N-formylmethionyl-tRNA(fMet); mRNA recruitment can occur at any time during PIC assembly.

It localises to the cytoplasm. One of the essential components for the initiation of protein synthesis. Stabilizes the binding of IF-2 and IF-3 on the 30S subunit to which N-formylmethionyl-tRNA(fMet) subsequently binds. Helps modulate mRNA selection, yielding the 30S pre-initiation complex (PIC). Upon addition of the 50S ribosomal subunit IF-1, IF-2 and IF-3 are released leaving the mature 70S translation initiation complex. The protein is Translation initiation factor IF-1 of Shewanella loihica (strain ATCC BAA-1088 / PV-4).